A 46-amino-acid polypeptide reads, in one-letter code: Defensin-like protein AX2 (46 aa).

Disulfide bonds link Cys-3–Cys-46, Cys-14–Cys-34, Cys-20–Cys-40, and Cys-24–Cys-42.

In terms of tissue distribution, leaves and flowers.

Functionally, strong inhibiting activity against C.beticola and other filamentous fungi. Little or no effect against bacteria. This Beta vulgaris (Sugar beet) protein is Defensin-like protein AX2.